We begin with the raw amino-acid sequence, 227 residues long: Phosphoribosylformylglycinamidine synthase subunit PurQ (227 aa).

Residues 3–225 (FAVIVFPGSN…LKQWRETYVV (223 aa)) form the Glutamine amidotransferase type-1 domain. The Nucleophile role is filled by cysteine 86. Catalysis depends on residues histidine 194 and glutamate 196.

Part of the FGAM synthase complex composed of 1 PurL, 1 PurQ and 2 PurS subunits.

The protein resides in the cytoplasm. The enzyme catalyses N(2)-formyl-N(1)-(5-phospho-beta-D-ribosyl)glycinamide + L-glutamine + ATP + H2O = 2-formamido-N(1)-(5-O-phospho-beta-D-ribosyl)acetamidine + L-glutamate + ADP + phosphate + H(+). It catalyses the reaction L-glutamine + H2O = L-glutamate + NH4(+). Its pathway is purine metabolism; IMP biosynthesis via de novo pathway; 5-amino-1-(5-phospho-D-ribosyl)imidazole from N(2)-formyl-N(1)-(5-phospho-D-ribosyl)glycinamide: step 1/2. Its function is as follows. Part of the phosphoribosylformylglycinamidine synthase complex involved in the purines biosynthetic pathway. Catalyzes the ATP-dependent conversion of formylglycinamide ribonucleotide (FGAR) and glutamine to yield formylglycinamidine ribonucleotide (FGAM) and glutamate. The FGAM synthase complex is composed of three subunits. PurQ produces an ammonia molecule by converting glutamine to glutamate. PurL transfers the ammonia molecule to FGAR to form FGAM in an ATP-dependent manner. PurS interacts with PurQ and PurL and is thought to assist in the transfer of the ammonia molecule from PurQ to PurL. This Bacillus anthracis (strain A0248) protein is Phosphoribosylformylglycinamidine synthase subunit PurQ.